The following is a 259-amino-acid chain: Ribosomal RNA small subunit methyltransferase A (259 aa).

6 residues coordinate S-adenosyl-L-methionine: N13, L15, G40, E61, D85, and N103.

It belongs to the class I-like SAM-binding methyltransferase superfamily. rRNA adenine N(6)-methyltransferase family. RsmA subfamily.

The protein resides in the cytoplasm. It carries out the reaction adenosine(1518)/adenosine(1519) in 16S rRNA + 4 S-adenosyl-L-methionine = N(6)-dimethyladenosine(1518)/N(6)-dimethyladenosine(1519) in 16S rRNA + 4 S-adenosyl-L-homocysteine + 4 H(+). Its function is as follows. Specifically dimethylates two adjacent adenosines (A1518 and A1519) in the loop of a conserved hairpin near the 3'-end of 16S rRNA in the 30S particle. May play a critical role in biogenesis of 30S subunits. The protein is Ribosomal RNA small subunit methyltransferase A of Neisseria gonorrhoeae (strain ATCC 700825 / FA 1090).